The chain runs to 362 residues: Aspartate carbamoyltransferase catalytic subunit (362 aa).

The tract at residues 1–22 (MPKTAMTDSTSKTSTNTASSDM) is disordered. The segment covering 7–20 (TDSTSKTSTNTASS) has biased composition (low complexity). Residues Arg100 and Thr101 each coordinate carbamoyl phosphate. Lys128 lines the L-aspartate pocket. Arg150, His180, and Gln183 together coordinate carbamoyl phosphate. L-aspartate is bound by residues Arg214 and Arg269. Carbamoyl phosphate contacts are provided by Gly310 and Pro311.

It belongs to the aspartate/ornithine carbamoyltransferase superfamily. ATCase family. As to quaternary structure, heterododecamer (2C3:3R2) of six catalytic PyrB chains organized as two trimers (C3), and six regulatory PyrI chains organized as three dimers (R2).

The catalysed reaction is carbamoyl phosphate + L-aspartate = N-carbamoyl-L-aspartate + phosphate + H(+). The protein operates within pyrimidine metabolism; UMP biosynthesis via de novo pathway; (S)-dihydroorotate from bicarbonate: step 2/3. Its function is as follows. Catalyzes the condensation of carbamoyl phosphate and aspartate to form carbamoyl aspartate and inorganic phosphate, the committed step in the de novo pyrimidine nucleotide biosynthesis pathway. The chain is Aspartate carbamoyltransferase catalytic subunit from Psychrobacter sp. (strain PRwf-1).